The primary structure comprises 309 residues: ADP,ATP carrier protein 1 (309 aa).

Solcar repeat units follow at residues S11–L104, K116–V208, and G216–I302. Helical transmembrane passes span F13 to L40, T81 to L105, Y114 to L134, F184 to F205, and V219 to L239. R86 and K98 together coordinate ADP. R243 lines the ADP pocket. Residues R243 to M248 are important for transport activity. A Nucleotide carrier signature motif motif is present at residues R243–M248. A helical transmembrane segment spans residues C279 to L299.

Belongs to the mitochondrial carrier (TC 2.A.29) family. Monomer.

Its subcellular location is the mitochondrion inner membrane. It carries out the reaction ADP(in) + ATP(out) = ADP(out) + ATP(in). With respect to regulation, the matrix-open state (m-state) is inhibited by the membrane-permeable bongkrekic acid (BKA). The cytoplasmic-open state (c-state) is inhibited by the membrane-impermeable toxic inhibitor carboxyatractyloside (CATR). Functionally, ADP:ATP antiporter that mediates import of ADP into the mitochondrial matrix for ATP synthesis, and export of ATP out to fuel the cell. Cycles between the cytoplasmic-open state (c-state) and the matrix-open state (m-state): operates by the alternating access mechanism with a single substrate-binding site intermittently exposed to either the cytosolic (c-state) or matrix (m-state) side of the inner mitochondrial membrane. The sequence is that of ADP,ATP carrier protein 1 (AAC1) from Saccharomyces cerevisiae (strain ATCC 204508 / S288c) (Baker's yeast).